The following is a 509-amino-acid chain: Bifunctional purine biosynthesis protein PurH (509 aa).

One can recognise an MGS-like domain in the interval 1–144 (MKRALISVSD…KNYAAVTVVV (144 aa)).

The protein belongs to the PurH family.

The catalysed reaction is (6R)-10-formyltetrahydrofolate + 5-amino-1-(5-phospho-beta-D-ribosyl)imidazole-4-carboxamide = 5-formamido-1-(5-phospho-D-ribosyl)imidazole-4-carboxamide + (6S)-5,6,7,8-tetrahydrofolate. The enzyme catalyses IMP + H2O = 5-formamido-1-(5-phospho-D-ribosyl)imidazole-4-carboxamide. The protein operates within purine metabolism; IMP biosynthesis via de novo pathway; 5-formamido-1-(5-phospho-D-ribosyl)imidazole-4-carboxamide from 5-amino-1-(5-phospho-D-ribosyl)imidazole-4-carboxamide (10-formyl THF route): step 1/1. It participates in purine metabolism; IMP biosynthesis via de novo pathway; IMP from 5-formamido-1-(5-phospho-D-ribosyl)imidazole-4-carboxamide: step 1/1. This chain is Bifunctional purine biosynthesis protein PurH, found in Listeria monocytogenes serotype 4b (strain F2365).